Here is a 188-residue protein sequence, read N- to C-terminus: HSCEICHNVGKSCEGSVEPCTSPEDQCGTVVLEFSPAPVSFRSIHKNCFSSSLCKLGSFDVNVGQNTYVRGRIQCCDEERCEEPQFSGHCASHPNGYYCPGIFGLFSLDSSANEAVCKGTETKCINIAGYRKEMYPGDIAYNIKGCISSCPELSLSNRTHEVDRNELIKVECTDAVKIPPSECQSSGI.

8 cysteine pairs are disulfide-bonded: Cys-3–Cys-27, Cys-6–Cys-13, Cys-20–Cys-48, Cys-54–Cys-75, Cys-76–Cys-81, Cys-99–Cys-124, Cys-117–Cys-146, and Cys-150–Cys-172. A glycan (N-linked (GlcNAc...) asparagine) is linked at Asn-157.

It belongs to the CNF-like-inhibitor family. In terms of assembly, heterodimer with phospholipase A2 inhibitor 25 kDa. In terms of processing, N-glycosylated. As to expression, expressed by the liver.

The protein localises to the secreted. In terms of biological role, inhibits the enzymatic activity of phospholipase A2. In Naja kaouthia (Monocled cobra), this protein is Phospholipase A2 inhibitor 31 kDa subunit.